Consider the following 214-residue polypeptide: ATP synthase subunit 5, mitochondrial (214 aa).

The N-terminal 24 residues, M1–A24, are a transit peptide targeting the mitochondrion.

F-type ATP synthases have 2 components, the catalytic core F(1) and the membrane-embedded component F(0), linked together by a central stalk and a peripheral stalk. The central stalk, also called rotor shaft, is often seen as part of F(1). The peripheral stalk is seen as part of F(0). F(0) contains the membrane channel next to the rotor. F-type ATP synthases form dimers but each monomer functions independently in ATP generation. The dimer consists of 17 different polypeptides: ATP1 (subunit alpha, 3 molecules per monomer, part of F(1)), ATP2 (subunit beta, 3 copies per monomer, part of F(1)), ATP3 (subunit gamma, part of the central stalk), ATP4 (subunit b, part of the peripheral stalk), ATP5/OSCP (subunit 5/OSCP, part of the peripheral stalk), ATP6 (subunit a, part of the peripheral stalk), ATP7 (subunit d, part of the peripheral stalk), ATP8 (subunit 8, part of the peripheral stalk), OLI1 (subunit c, part of the rotor, 10 molecules per monomer), ATP14 (subunit h, part of the peripheral stalk), ATP15 (subunit epsilon, part of the central stalk), ATP16 (subunit delta, part of the central stalk), ATP17 (subunit f, part of the peripheral stalk), ATP18 (subunit i/j, part of the peripheral stalk), ATP19 (subunit k, dimer-specific, at interface between monomers), ATP20 (subunit g, at interface between monomers), TIM11 (subunit e, at interface between monomers).

The protein localises to the mitochondrion inner membrane. In terms of biological role, mitochondrial membrane ATP synthase (F(1)F(0) ATP synthase or Complex V) produces ATP from ADP in the presence of a proton gradient across the membrane which is generated by electron transport complexes of the respiratory chain. F-type ATP synthases consist of two structural domains, F(1) - containing the extramembraneous catalytic core, and F(0) - containing the membrane proton channel, linked together by a central stalk and a peripheral stalk. During catalysis, ATP synthesis in the catalytic domain of F(1) is coupled via a rotary mechanism of the central stalk subunits to proton translocation. Part of the complex F(0) domain and the peripheral stalk, which acts as a stator to hold the catalytic alpha/ATP1(3)beta/ATP2(3) subcomplex and subunit a/ATP6 static relative to the rotary elements. The polypeptide is ATP synthase subunit 5, mitochondrial (Yarrowia lipolytica (strain CLIB 122 / E 150) (Yeast)).